Reading from the N-terminus, the 356-residue chain is MDVMNFLLNLVVPPAGLLMLAFAWPSLAFFRACEWALRIIYGEDMEGKVVIITGASSGIGEQIAYQYAKRRANLVLVARREHRLRSIREKARTLGAKNVLVIAADVVKEEDCKRFIDETINQYGHLDHLVNNAGLGHSFLFEEASDTSGFAHMMDINFWGSVYPTFFALPHLRRRNGRIIVNASVEGWLPMPRMSLYNAAKAAVVSFYETLRIEIGGAIDITIATPGWIESDMTRGRFMTEEGEVLFKEEPREMYVGPYPVAYTEECARTIVSGACKGQRYVRFPMWYNVFFLYRVFVPDLLDWTYRLLFLNHFITTASKDHTLHDFKGARKKLLITPTSLQLLHHQQHQSPKSSE.

Residues 10 to 30 traverse the membrane as a helical; Signal-anchor for type II membrane protein segment; it reads LVVPPAGLLMLAFAWPSLAFF. The Proline-knob signature appears at 13 to 26; the sequence is PPAGLLMLAFAWPS. 54-85 provides a ligand contact to NADP(+); it reads GASSGIGEQIAYQYAKRRANLVLVARREHRLR. Ser-184 serves as a coordination point for substrate. Tyr-197 (proton acceptor) is an active-site residue. NADP(+)-binding positions include 197-201 and Lys-201; that span reads YNAAK.

It belongs to the short-chain dehydrogenases/reductases (SDR) family. In terms of tissue distribution, expressed in megagametophytes (at protein level).

Its subcellular location is the lipid droplet. The protein localises to the membrane. The catalysed reaction is an 11beta-hydroxysteroid + NADP(+) = an 11-oxosteroid + NADPH + H(+). It catalyses the reaction corticosterone + NADP(+) = 11-dehydrocorticosterone + NADPH + H(+). The enzyme catalyses 17beta-estradiol + NADP(+) = estrone + NADPH + H(+). Has dehydrogenase activity against corticosterone (11 beta-hydroxysteroid) and estradiol (17 beta-hydroxysteroid) in the presence of NADP(+). May be involved in signal transduction regulated by various sterols. The sequence is that of 11-beta-hydroxysteroid dehydrogenase from Pinus massoniana (Chinese red pine).